The primary structure comprises 219 residues: Large ribosomal subunit protein uL3 (219 aa).

The segment at 134 to 153 (RASHGNSRSHNVPGSIGMAQ) is disordered. Gln153 carries the post-translational modification N5-methylglutamine.

Belongs to the universal ribosomal protein uL3 family. Part of the 50S ribosomal subunit. Forms a cluster with proteins L14 and L19. Post-translationally, methylated by PrmB.

Its function is as follows. One of the primary rRNA binding proteins, it binds directly near the 3'-end of the 23S rRNA, where it nucleates assembly of the 50S subunit. This is Large ribosomal subunit protein uL3 from Paraburkholderia phytofirmans (strain DSM 17436 / LMG 22146 / PsJN) (Burkholderia phytofirmans).